Consider the following 283-residue polypeptide: Pantothenate synthetase (283 aa).

30–37 provides a ligand contact to ATP; it reads MGNLHAGH. Histidine 37 serves as the catalytic Proton donor. Position 61 (glutamine 61) interacts with (R)-pantoate. Glutamine 61 provides a ligand contact to beta-alanine. 149 to 152 contributes to the ATP binding site; sequence GEKD. Glutamine 155 contacts (R)-pantoate. ATP-binding positions include valine 178 and 186-189; that span reads LSSR.

It belongs to the pantothenate synthetase family. As to quaternary structure, homodimer.

Its subcellular location is the cytoplasm. It carries out the reaction (R)-pantoate + beta-alanine + ATP = (R)-pantothenate + AMP + diphosphate + H(+). Its pathway is cofactor biosynthesis; (R)-pantothenate biosynthesis; (R)-pantothenate from (R)-pantoate and beta-alanine: step 1/1. Catalyzes the condensation of pantoate with beta-alanine in an ATP-dependent reaction via a pantoyl-adenylate intermediate. The polypeptide is Pantothenate synthetase (Pseudomonas paraeruginosa (strain DSM 24068 / PA7) (Pseudomonas aeruginosa (strain PA7))).